Here is a 155-residue protein sequence, read N- to C-terminus: Large ribosomal subunit protein uL22 (155 aa).

It belongs to the universal ribosomal protein uL22 family. In terms of assembly, part of the 50S ribosomal subunit.

Functionally, this protein binds specifically to 23S rRNA. It makes multiple contacts with different domains of the 23S rRNA in the assembled 50S subunit and ribosome. The globular domain of the protein is located near the polypeptide exit tunnel on the outside of the subunit, while an extended beta-hairpin is found that lines the wall of the exit tunnel in the center of the 70S ribosome. This is Large ribosomal subunit protein uL22 from Archaeoglobus fulgidus (strain ATCC 49558 / DSM 4304 / JCM 9628 / NBRC 100126 / VC-16).